The sequence spans 379 residues: Protein-glutamate methylesterase/protein-glutamine glutaminase (379 aa).

The 118-residue stretch at 4-121 (KVLVVDDSSF…AKNSDEAGSL (118 aa)) folds into the Response regulatory domain. Asp-55 is modified (4-aspartylphosphate). A CheB-type methylesterase domain is found at 185 to 379 (SGKEYKLLAI…ASMVKEISRG (195 aa)). Residues Ser-197, His-224, and Asp-321 contribute to the active site.

This sequence belongs to the CheB family. Post-translationally, phosphorylated by CheA. Phosphorylation of the N-terminal regulatory domain activates the methylesterase activity.

Its subcellular location is the cytoplasm. The catalysed reaction is [protein]-L-glutamate 5-O-methyl ester + H2O = L-glutamyl-[protein] + methanol + H(+). It carries out the reaction L-glutaminyl-[protein] + H2O = L-glutamyl-[protein] + NH4(+). Its function is as follows. Involved in chemotaxis. Part of a chemotaxis signal transduction system that modulates chemotaxis in response to various stimuli. Catalyzes the demethylation of specific methylglutamate residues introduced into the chemoreceptors (methyl-accepting chemotaxis proteins or MCP) by CheR. Also mediates the irreversible deamidation of specific glutamine residues to glutamic acid. The sequence is that of Protein-glutamate methylesterase/protein-glutamine glutaminase from Colwellia psychrerythraea (strain 34H / ATCC BAA-681) (Vibrio psychroerythus).